A 189-amino-acid chain; its full sequence is Low affinity inorganic phosphate transporter 2 (189 aa).

Over 1-55 the chain is Cytoplasmic; sequence TARYTALVAKDAKRAAADMGKVLHVEIDPEDAKVERMAKDESNQFGLFSWEFVRR. The chain crosses the membrane as a helical span at residues 56 to 76; that stretch reads HGLHLFGTCSTWFLLDIAFYS. The Extracellular segment spans residues 77-111; sequence QNLFQKDVFTAIGWIPPAKTMNAVQEVYKIARAQT. The helical transmembrane segment at 112–132 threads the bilayer; that stretch reads LIALCSTVPGYWFTVAFIDII. Over 133-134 the chain is Cytoplasmic; the sequence is GR. A helical membrane pass occupies residues 135–155; it reads FAIQLMGFFFMTVFMFAIAIP. Over 156–165 the chain is Extracellular; it reads YHHWTLQENR. The chain crosses the membrane as a helical span at residues 166-186; it reads IGFVIMYSLTFFFANFGPNAT. The Cytoplasmic portion of the chain corresponds to 187–189; that stretch reads TFV.

It belongs to the major facilitator superfamily. Phosphate:H(+) symporter (TC 2.A.1.9) family.

The protein localises to the cell membrane. The catalysed reaction is phosphate(in) + H(+)(in) = phosphate(out) + H(+)(out). Low-affinity transporter for external inorganic phosphate (Pi). The polypeptide is Low affinity inorganic phosphate transporter 2 (Petunia hybrida (Petunia)).